The sequence spans 299 residues: Oxygen-dependent coproporphyrinogen-III oxidase (299 aa).

Ser92 is a substrate binding site. A divalent metal cation-binding residues include His96 and His106. His106 functions as the Proton donor in the catalytic mechanism. 108-110 (NVR) lines the substrate pocket. A divalent metal cation-binding residues include His145 and His175. An important for dimerization region spans residues 240–275 (YVEFNLVWDRGTLFGLQTGGRTESILMSMPPLVRWE). Position 258–260 (258–260 (GGR)) interacts with substrate.

Belongs to the aerobic coproporphyrinogen-III oxidase family. Homodimer. The cofactor is a divalent metal cation.

It is found in the cytoplasm. It catalyses the reaction coproporphyrinogen III + O2 + 2 H(+) = protoporphyrinogen IX + 2 CO2 + 2 H2O. It functions in the pathway porphyrin-containing compound metabolism; protoporphyrin-IX biosynthesis; protoporphyrinogen-IX from coproporphyrinogen-III (O2 route): step 1/1. In terms of biological role, involved in the heme biosynthesis. Catalyzes the aerobic oxidative decarboxylation of propionate groups of rings A and B of coproporphyrinogen-III to yield the vinyl groups in protoporphyrinogen-IX. The sequence is that of Oxygen-dependent coproporphyrinogen-III oxidase from Enterobacter sp. (strain 638).